Consider the following 454-residue polypeptide: tRNA modification GTPase MnmE (454 aa).

(6S)-5-formyl-5,6,7,8-tetrahydrofolate contacts are provided by arginine 23, glutamate 80, and lysine 120. In terms of domain architecture, TrmE-type G spans 216–377 (GMKVVIAGRP…LREHLKQSMG (162 aa)). A K(+)-binding site is contributed by asparagine 226. Residues 226 to 231 (NAGKSS), 245 to 251 (TDIAGTT), and 270 to 273 (DTAG) contribute to the GTP site. Residue serine 230 coordinates Mg(2+). Residues threonine 245, isoleucine 247, and threonine 250 each contribute to the K(+) site. Residue threonine 251 coordinates Mg(2+). A (6S)-5-formyl-5,6,7,8-tetrahydrofolate-binding site is contributed by lysine 454.

It belongs to the TRAFAC class TrmE-Era-EngA-EngB-Septin-like GTPase superfamily. TrmE GTPase family. Homodimer. Heterotetramer of two MnmE and two MnmG subunits. Requires K(+) as cofactor.

It is found in the cytoplasm. Its function is as follows. Exhibits a very high intrinsic GTPase hydrolysis rate. Involved in the addition of a carboxymethylaminomethyl (cmnm) group at the wobble position (U34) of certain tRNAs, forming tRNA-cmnm(5)s(2)U34. This chain is tRNA modification GTPase MnmE, found in Mannheimia succiniciproducens (strain KCTC 0769BP / MBEL55E).